The primary structure comprises 475 residues: Ankyrin repeat, SAM and basic leucine zipper domain-containing protein 1 (475 aa).

Residues Ser-17, Ser-18, and Ser-20 each carry the phosphoserine modification. ANK repeat units follow at residues 45 to 74 (EKNE…SVDT), 78 to 107 (YGWT…NASF), 110 to 144 (DKQT…DPNM), 148 to 177 (RLMT…DVNA), 181 to 210 (NGYT…NKMI), and 214 to 243 (DGKT…PLEG). Residues 272-334 (SYTAFGDLEI…KILAALKELE (63 aa)) enclose the SAM domain.

As to quaternary structure, interacts with DDX4, PIWIL1, RANBP9 and TDRD1.

It is found in the cytoplasm. Plays a central role during spermatogenesis by repressing transposable elements and preventing their mobilization, which is essential for the germline integrity. Acts via the piRNA metabolic process, which mediates the repression of transposable elements during meiosis by forming complexes composed of piRNAs and Piwi proteins and governs the methylation and subsequent repression of transposons. Its association with pi-bodies suggests a participation in the primary piRNAs metabolic process. Required prior to the pachytene stage to facilitate the production of multiple types of piRNAs, including those associated with repeats involved in the regulation of retrotransposons. May act by mediating protein-protein interactions during germ cell maturation. The chain is Ankyrin repeat, SAM and basic leucine zipper domain-containing protein 1 (ASZ1) from Atelerix albiventris (Middle-African hedgehog).